A 707-amino-acid polypeptide reads, in one-letter code: Polyribonucleotide nucleotidyltransferase (707 aa).

Mg(2+) contacts are provided by Asp488 and Asp494. The region spanning 555–614 (PRLYVMKINPEKIRDVIGKGGAVIRALTEETGTQINIEEDGTITIASNDSAKADEAKRRI) is the KH domain. The S1 motif domain occupies 624–692 (GKVYEGAITK…EKGRVKLSMK (69 aa)).

The protein belongs to the polyribonucleotide nucleotidyltransferase family. Mg(2+) is required as a cofactor.

The protein localises to the cytoplasm. It carries out the reaction RNA(n+1) + phosphate = RNA(n) + a ribonucleoside 5'-diphosphate. Functionally, involved in mRNA degradation. Catalyzes the phosphorolysis of single-stranded polyribonucleotides processively in the 3'- to 5'-direction. The chain is Polyribonucleotide nucleotidyltransferase from Polaromonas sp. (strain JS666 / ATCC BAA-500).